The sequence spans 250 residues: MGAAASIQTTVNTLSERISSKLEQEANASAQTKCDIEIGNFYIRQNHGCNLTVKNMCSADADAQLDAVLSAATETYSGLTPEQKAYVPAMFTAALNIQTSVNTVVRDFENYVKQTCNSSAVVDNKLKIQNVIIDECYGAPGSPTNLEFINTGSSKGNCAIKALMQLTTKATTQIAPRQVAGTGVQFYMIVIGVIILAALFMYYAKRMLFTSTNDKIKLILANKENVHWTTYMDTFFRTSPMVIATTDIQN.

A lipid anchor (N-myristoyl glycine; by host) is attached at G2. Positions 2–12 (GAAASIQTTVN) are targeting to MV membrane. The Virion surface portion of the chain corresponds to 2–183 (GAAASIQTTV…IAPRQVAGTG (182 aa)). Intrachain disulfides connect C34–C57, C49–C136, and C116–C158. The helical transmembrane segment at 184-204 (VQFYMIVIGVIILAALFMYYA) threads the bilayer. Topologically, residues 205–250 (KRMLFTSTNDKIKLILANKENVHWTTYMDTFFRTSPMVIATTDIQN) are intravirion.

Belongs to the orthopoxvirus OPG095 family. In terms of assembly, component of the entry fusion complex (EFC) composed of OPG053, OPG076, OPG086, OPG094, OPG095, OPG099, OPG107, OPG143, OPG104, OPG147 and OPG155. Except for OPG095 and OPG053, each of the EFC proteins is required for assembly or stability of the complex. Myristoylated. In terms of processing, disulfid bonds are oxidized in the cytoplasm by OPG088 protein. Post-translationally, unglycosylated because produced in viral factories instead of the classic ER -Golgi route.

The protein localises to the virion membrane. In terms of biological role, component of the entry fusion complex (EFC), which consists of 11 proteins. During cell infection, this complex mediates entry of the virion core into the host cytoplasm by a two-step mechanism consisting of lipid mixing of the viral and cellular membranes and subsequent pore formation. The sequence is that of Entry-fusion complex associated protein OPG095 (OPG099) from Variola virus (isolate Human/India/Ind3/1967) (VARV).